A 389-amino-acid polypeptide reads, in one-letter code: Teichoic acid glycerol-phosphate transferase (389 aa).

The protein belongs to the CDP-glycerol glycerophosphotransferase family.

Its subcellular location is the cell membrane. It carries out the reaction 4-O-[(2R)-glycerylphospho]-N-acetyl-beta-D-mannosaminyl-(1-&gt;4)-N-acetyl-alpha-D-glucosaminyl di-trans,octa-cis-undecaprenyl diphosphate + CDP-glycerol = 4-O-[di(2R)-glycerylphospho]-N-acetyl-beta-D-mannosaminyl-(1-&gt;4)-N-acetyl-alpha-D-glucosaminyl di-trans,octa-cis-undecaprenyl diphosphate + CMP + H(+). Its pathway is cell wall biogenesis; poly(ribitol phosphate) teichoic acid biosynthesis. Functionally, catalyzes the addition of a second glycerol phosphate unit from CDP-glycerol to the prenolpyrophosphate-linked disaccharide, to complete the linkage unit. The protein is Teichoic acid glycerol-phosphate transferase (tarF) of Staphylococcus aureus (strain NCTC 8325 / PS 47).